A 422-amino-acid polypeptide reads, in one-letter code: MALRGSHRLQVILKRCIASPLFHSHAPNRRSSQPAIKGGEPNSNGNSGHDQQNGERKGKGWRRLVSFFVPFSLGAVVSAAVIKREDFTPTIAASKMTGRRRDFNFIADVVAGCADSVVYIEIKDTRHFDYFSGQPITASNGSGFIIEQNGLILTNAHVVINKPHTMVQVRLSDGRTFPATIEDVDQTSDLATLRIQVNNLSVMRLGKSSTLRSGEWVVALGSPLALSNTVTAGVISSTQRASQELGLRNRDINYLQTDAAITFGNSGGPLVNLDGEAIGVNSMKVTAGISFAIPIDYVKVFLERAAEKRKKGSAYKTGYPVKRYMGITMLTLTPDILFELKSRSQNMPSNLTHGVLVWKVIVGSPAHSGGLQPGDIVTHINKKEIKNSSDVYDALADNSKNLDIVILRGVKQMHVTITPEDP.

Residues 1–17 constitute a mitochondrion transit peptide; that stretch reads MALRGSHRLQVILKRCI. Residues 18-74 constitute a propeptide that is removed on maturation; that stretch reads ASPLFHSHAPNRRSSQPAIKGGEPNSNGNSGHDQQNGERKGKGWRRLVSFFVPFSLG. The segment at 24 to 56 is disordered; sequence SHAPNRRSSQPAIKGGEPNSNGNSGHDQQNGER. A compositionally biased stretch (polar residues) spans 41 to 51; that stretch reads PNSNGNSGHDQ. The helical transmembrane segment at 64–82 threads the bilayer; the sequence is LVSFFVPFSLGAVVSAAVI. 2 short sequence motifs (IAP-binding) span residues 75 to 78 and 94 to 97; these read AVVS and SKMT. Residues 139-302 form a serine protease region; sequence SNGSGFIIEQ…IPIDYVKVFL (164 aa). Active-site charge relay system residues include histidine 157, aspartate 189, and serine 266. The PDZ domain maps to 325–410; the sequence is MGITMLTLTP…NLDIVILRGV (86 aa).

This sequence belongs to the peptidase S1C family. Interacts with th/DIAP1 (via BIR 2 domain).

Its subcellular location is the mitochondrion intermembrane space. The protein localises to the mitochondrion membrane. It carries out the reaction Cleavage of non-polar aliphatic amino-acids at the P1 position, with a preference for Val, Ile and Met. At the P2 and P3 positions, Arg is selected most strongly with a secondary preference for other hydrophilic residues.. Functionally, serine protease that shows proteolytic activity against a non-specific substrate beta-casein. Promotes or induces cell death either by direct binding to and inhibition of BIRC proteins (also called inhibitor of apoptosis proteins, IAPs), leading to an increase in caspase activity, or by a BIRC inhibition-independent, caspase-independent and serine protease activity-dependent mechanism. Can antagonize antiapoptotic activity of th/Diap1 by directly inducing the degradation of th/Diap1. This chain is Serine protease HTRA2, mitochondrial, found in Drosophila erecta (Fruit fly).